Here is a 246-residue protein sequence, read N- to C-terminus: Myogenic factor 5 (246 aa).

A disordered region spans residues 1-38 (RVRARIPGLSSPEGEFPEDFEPRELPPFGAPAPTEPAC). The region spanning 73 to 124 (DRRKAATMRERRRLKKVNQAFETLKRCTTANPNQRLPKVEILRNAIRYIESL) is the bHLH domain. The disordered stretch occupies residues 210–246 (EEPGLPLRHAGSLSPGASIDSGARTPGSPPPRTYQAL). The segment covering 236–246 (GSPPPRTYQAL) has biased composition (pro residues).

In terms of assembly, efficient DNA binding requires dimerization with another bHLH protein.

It localises to the nucleus. Acts as a transcriptional activator that promotes transcription of muscle-specific target genes and plays a role in muscle differentiation. Induces fibroblasts to differentiate into myoblasts. Probable sequence specific DNA-binding protein. The protein is Myogenic factor 5 (MYF5) of Coturnix japonica (Japanese quail).